The chain runs to 248 residues: AA9 family lytic polysaccharide monooxygenase G (248 aa).

A signal peptide spans 1–21; sequence MLPNAAGLLVAGVVSLSGVAA. Histidine 22 lines the Cu(2+) pocket. N-linked (GlcNAc...) asparagine glycosylation occurs at asparagine 58. A disulfide bridge links cysteine 77 with cysteine 195. Histidine 107 lines the Cu(2+) pocket. Glutamine 190 contributes to the O2 binding site. Residue tyrosine 192 participates in Cu(2+) binding. Asparagine 203 is a glycosylation site (N-linked (GlcNAc...) asparagine).

This sequence belongs to the polysaccharide monooxygenase AA9 family. Requires Cu(2+) as cofactor.

It is found in the secreted. It catalyses the reaction [(1-&gt;4)-beta-D-glucosyl]n+m + reduced acceptor + O2 = 4-dehydro-beta-D-glucosyl-[(1-&gt;4)-beta-D-glucosyl]n-1 + [(1-&gt;4)-beta-D-glucosyl]m + acceptor + H2O.. Lytic polysaccharide monooxygenase (LPMO) that depolymerizes crystalline and amorphous polysaccharides via the oxidation of scissile alpha- or beta-(1-4)-glycosidic bonds, yielding C1 or C4 oxidation products. Catalysis by LPMOs requires the reduction of the active-site copper from Cu(II) to Cu(I) by a reducing agent and H(2)O(2) or O(2) as a cosubstrate. This is AA9 family lytic polysaccharide monooxygenase G from Malbranchea cinnamomea (Thermophilic fungus).